The following is a 210-amino-acid chain: dTTP/UTP pyrophosphatase (210 aa).

Positions 1–15 are enriched in basic and acidic residues; that stretch reads MTHGDNRDGPGRETR. The tract at residues 1-22 is disordered; that stretch reads MTHGDNRDGPGRETRSSGPLVL. D86 functions as the Proton acceptor in the catalytic mechanism.

This sequence belongs to the Maf family. YhdE subfamily. Requires a divalent metal cation as cofactor.

It is found in the cytoplasm. It carries out the reaction dTTP + H2O = dTMP + diphosphate + H(+). The enzyme catalyses UTP + H2O = UMP + diphosphate + H(+). Nucleoside triphosphate pyrophosphatase that hydrolyzes dTTP and UTP. May have a dual role in cell division arrest and in preventing the incorporation of modified nucleotides into cellular nucleic acids. The protein is dTTP/UTP pyrophosphatase of Rhodospirillum rubrum (strain ATCC 11170 / ATH 1.1.1 / DSM 467 / LMG 4362 / NCIMB 8255 / S1).